The sequence spans 333 residues: Biotin synthase (333 aa).

Residues 46 to 275 form the Radical SAM core domain; that stretch reads YYGKKVKLNM…TKEIRISGGR (230 aa). [4Fe-4S] cluster is bound by residues Cys64, Cys68, and Cys71. [2Fe-2S] cluster contacts are provided by Cys108, Cys140, Cys200, and Arg270.

It belongs to the radical SAM superfamily. Biotin synthase family. In terms of assembly, homodimer. It depends on [4Fe-4S] cluster as a cofactor. Requires [2Fe-2S] cluster as cofactor.

It catalyses the reaction (4R,5S)-dethiobiotin + (sulfur carrier)-SH + 2 reduced [2Fe-2S]-[ferredoxin] + 2 S-adenosyl-L-methionine = (sulfur carrier)-H + biotin + 2 5'-deoxyadenosine + 2 L-methionine + 2 oxidized [2Fe-2S]-[ferredoxin]. It functions in the pathway cofactor biosynthesis; biotin biosynthesis; biotin from 7,8-diaminononanoate: step 2/2. Its function is as follows. Catalyzes the conversion of dethiobiotin (DTB) to biotin by the insertion of a sulfur atom into dethiobiotin via a radical-based mechanism. This Halalkalibacterium halodurans (strain ATCC BAA-125 / DSM 18197 / FERM 7344 / JCM 9153 / C-125) (Bacillus halodurans) protein is Biotin synthase.